The following is a 120-amino-acid chain: NAD(P)H-quinone oxidoreductase subunit 3, organellar chromatophore (120 aa).

3 helical membrane passes run 6-26 (GYDAFLGFLLIATAVPVLALL), 64-84 (MFALVFVIFDVETVFLYPWAV), and 89-109 (LGLLAFIEALIFIAILVIALA).

This sequence belongs to the complex I subunit 3 family. As to quaternary structure, NDH is composed of at least 16 different subunits, 5 of which are encoded in the nucleus.

Its subcellular location is the plastid. The protein localises to the organellar chromatophore thylakoid membrane. It carries out the reaction a plastoquinone + NADH + (n+1) H(+)(in) = a plastoquinol + NAD(+) + n H(+)(out). The catalysed reaction is a plastoquinone + NADPH + (n+1) H(+)(in) = a plastoquinol + NADP(+) + n H(+)(out). NDH shuttles electrons from NAD(P)H:plastoquinone, via FMN and iron-sulfur (Fe-S) centers, to quinones in the photosynthetic chain and possibly in a chloroplast respiratory chain. The immediate electron acceptor for the enzyme in this species is believed to be plastoquinone. Couples the redox reaction to proton translocation, and thus conserves the redox energy in a proton gradient. This is NAD(P)H-quinone oxidoreductase subunit 3, organellar chromatophore from Paulinella chromatophora.